Consider the following 262-residue polypeptide: Hydroxyethylthiazole kinase (262 aa).

A substrate-binding site is contributed by Met-50. Residues Arg-125 and Thr-171 each coordinate ATP. Residue Gly-198 participates in substrate binding.

It belongs to the Thz kinase family. The cofactor is Mg(2+).

The catalysed reaction is 5-(2-hydroxyethyl)-4-methylthiazole + ATP = 4-methyl-5-(2-phosphooxyethyl)-thiazole + ADP + H(+). It participates in cofactor biosynthesis; thiamine diphosphate biosynthesis; 4-methyl-5-(2-phosphoethyl)-thiazole from 5-(2-hydroxyethyl)-4-methylthiazole: step 1/1. Functionally, catalyzes the phosphorylation of the hydroxyl group of 4-methyl-5-beta-hydroxyethylthiazole (THZ). This chain is Hydroxyethylthiazole kinase, found in Shigella sonnei (strain Ss046).